The primary structure comprises 459 residues: Methionine aminopeptidase 2-2 (459 aa).

Residues 1–12 (MGSKSPEDHRQG) show a composition bias toward basic and acidic residues. A disordered region spans residues 1–87 (MGSKSPEDHR…KKLSVVQQTS (87 aa)). The segment covering 43-54 (GQDEDGDDDDDE) has biased composition (acidic residues). The segment covering 55–66 (KTGIDLKTNDGA) has biased composition (basic and acidic residues). Residues 67–79 (KKKRKRNKKKSKK) show a composition bias toward basic residues. Histidine 210 provides a ligand contact to substrate. Residues aspartate 231, aspartate 242, and histidine 311 each coordinate a divalent metal cation. Residue histidine 319 coordinates substrate. 2 residues coordinate a divalent metal cation: glutamate 344 and glutamate 440.

The protein belongs to the peptidase M24A family. Methionine aminopeptidase eukaryotic type 2 subfamily. Co(2+) is required as a cofactor. Requires Zn(2+) as cofactor. It depends on Mn(2+) as a cofactor. Fe(2+) serves as cofactor.

It is found in the cytoplasm. It catalyses the reaction Release of N-terminal amino acids, preferentially methionine, from peptides and arylamides.. Cotranslationally removes the N-terminal methionine from nascent proteins. The N-terminal methionine is often cleaved when the second residue in the primary sequence is small and uncharged (Met-Ala-, Cys, Gly, Pro, Ser, Thr, or Val). The chain is Methionine aminopeptidase 2-2 from Pyrenophora teres f. teres (strain 0-1) (Barley net blotch fungus).